An 883-amino-acid chain; its full sequence is Aldehyde-alcohol dehydrogenase (883 aa).

The interval 13–456 is aldehyde dehydrogenase; that stretch reads KLVAEKHVDE…DNVSAINLLN (444 aa). NAD(+)-binding positions include 121 to 126, G206, and G224; that span reads ITPTTN. C257 acts as the Nucleophile in catalysis. Residues E355, L435, and 438–443 contribute to the NAD(+) site; that span reads GSYGRN. The linker stretch occupies residues 457–464; it reads IKKVGRRR. NAD(+)-binding positions include D500, D534, 561–565, 612–613, V625, K634, and L653; these read GSPMD and TT. Positions 668, 672, 736, and 750 each coordinate Fe cation.

This sequence in the N-terminal section; belongs to the aldehyde dehydrogenase family. In the C-terminal section; belongs to the iron-containing alcohol dehydrogenase family. Fe(2+) serves as cofactor.

It catalyses the reaction an aldehyde + NAD(+) + H2O = a carboxylate + NADH + 2 H(+). It carries out the reaction ethanol + NAD(+) = acetaldehyde + NADH + H(+). In terms of biological role, has alcohol dehydrogenase activity. Has aldehyde dehydrogenase activity. Plays a role in enhancing virulence in mice, under ethanol stress conditions, perhaps by inducing expression of pneumolysin (Ply) and increasing production of hydrogen peroxide H(2)O(2). May be considered a potential virulence factor. In Streptococcus pneumoniae serotype 2 (strain D39 / NCTC 7466), this protein is Aldehyde-alcohol dehydrogenase.